Consider the following 211-residue polypeptide: Pyridoxine/pyridoxamine 5'-phosphate oxidase (211 aa).

Substrate-binding positions include Arg-7–Tyr-10 and Lys-65. Residues Arg-60–Lys-65, Phe-75–Thr-76, Arg-81, and Lys-82 contribute to the FMN site. Substrate contacts are provided by Tyr-122, Arg-126, and Ser-130. FMN contacts are provided by residues Gln-139–Ser-140 and Trp-183. Residue Arg-189–His-191 participates in substrate binding. Arg-193 is a binding site for FMN.

The protein belongs to the pyridoxamine 5'-phosphate oxidase family. Homodimer. Requires FMN as cofactor.

It carries out the reaction pyridoxamine 5'-phosphate + O2 + H2O = pyridoxal 5'-phosphate + H2O2 + NH4(+). The enzyme catalyses pyridoxine 5'-phosphate + O2 = pyridoxal 5'-phosphate + H2O2. The protein operates within cofactor metabolism; pyridoxal 5'-phosphate salvage; pyridoxal 5'-phosphate from pyridoxamine 5'-phosphate: step 1/1. It participates in cofactor metabolism; pyridoxal 5'-phosphate salvage; pyridoxal 5'-phosphate from pyridoxine 5'-phosphate: step 1/1. Catalyzes the oxidation of either pyridoxine 5'-phosphate (PNP) or pyridoxamine 5'-phosphate (PMP) into pyridoxal 5'-phosphate (PLP). The protein is Pyridoxine/pyridoxamine 5'-phosphate oxidase of Herminiimonas arsenicoxydans.